The chain runs to 84 residues: Exodeoxyribonuclease 7 small subunit (84 aa).

Belongs to the XseB family. In terms of assembly, heterooligomer composed of large and small subunits.

The protein localises to the cytoplasm. It carries out the reaction Exonucleolytic cleavage in either 5'- to 3'- or 3'- to 5'-direction to yield nucleoside 5'-phosphates.. Functionally, bidirectionally degrades single-stranded DNA into large acid-insoluble oligonucleotides, which are then degraded further into small acid-soluble oligonucleotides. This is Exodeoxyribonuclease 7 small subunit from Bacillus velezensis (strain DSM 23117 / BGSC 10A6 / LMG 26770 / FZB42) (Bacillus amyloliquefaciens subsp. plantarum).